Here is a 188-residue protein sequence, read N- to C-terminus: MGVDIRHNKDRKVRRKEPKSQDIYLRLLVKLYRFLARRTNSTFNQVVLKRLFMSRTNRPPLSLSRMIRKMKLPGRENKTAVVVGTITDDVRVQEVPKLKVCALRVTSRARSRILRAGGKILTFDQLALDSPKGCGTVLLSGPRKGREVYRHFGKAPGTPHSHTKPYVRSKGRKFERARGRRASRGYKN.

A Glycyl lysine isopeptide (Lys-Gly) (interchain with G-Cter in SUMO2) cross-link involves residue Lys119. Ser130 bears the Phosphoserine mark. Residues 151–188 (HFGKAPGTPHSHTKPYVRSKGRKFERARGRRASRGYKN) are disordered. Thr158 is subject to Phosphothreonine. 2 stretches are compositionally biased toward basic residues: residues 161–171 (SHTKPYVRSKG) and 178–188 (RGRRASRGYKN). A Glycyl lysine isopeptide (Lys-Gly) (interchain with G-Cter in SUMO2) cross-link involves residue Lys164.

It belongs to the eukaryotic ribosomal protein eL18 family. Component of the large ribosomal subunit.

Its subcellular location is the cytoplasm. It is found in the cytosol. The protein resides in the rough endoplasmic reticulum. Its function is as follows. Component of the large ribosomal subunit. The ribosome is a large ribonucleoprotein complex responsible for the synthesis of proteins in the cell. This is Large ribosomal subunit protein eL18 (RPL18) from Homo sapiens (Human).